Here is a 519-residue protein sequence, read N- to C-terminus: ATP synthase subunit beta, mitochondrial (519 aa).

195-202 (GGAGVGKT) contributes to the ATP binding site.

Belongs to the ATPase alpha/beta chains family. As to quaternary structure, F-type ATPases have 2 components, CF(1) - the catalytic core - and CF(0) - the membrane proton channel. CF(1) has five subunits: alpha(3), beta(3), gamma(1), delta(1), epsilon(1). CF(0) has three main subunits: a, b and c.

The protein localises to the mitochondrion. The protein resides in the mitochondrion inner membrane. It catalyses the reaction ATP + H2O + 4 H(+)(in) = ADP + phosphate + 5 H(+)(out). Functionally, mitochondrial membrane ATP synthase (F(1)F(0) ATP synthase or Complex V) produces ATP from ADP in the presence of a proton gradient across the membrane which is generated by electron transport complexes of the respiratory chain. F-type ATPases consist of two structural domains, F(1) - containing the extramembraneous catalytic core, and F(0) - containing the membrane proton channel, linked together by a central stalk and a peripheral stalk. During catalysis, ATP synthesis in the catalytic domain of F(1) is coupled via a rotary mechanism of the central stalk subunits to proton translocation. Subunits alpha and beta form the catalytic core in F(1). Rotation of the central stalk against the surrounding alpha(3)beta(3) subunits leads to hydrolysis of ATP in three separate catalytic sites on the beta subunits. The polypeptide is ATP synthase subunit beta, mitochondrial (atp-2) (Neurospora crassa (strain ATCC 24698 / 74-OR23-1A / CBS 708.71 / DSM 1257 / FGSC 987)).